The chain runs to 157 residues: S-ribosylhomocysteine lyase (157 aa).

Fe cation-binding residues include His54, His58, and Cys124.

It belongs to the LuxS family. Homodimer. Requires Fe cation as cofactor.

It catalyses the reaction S-(5-deoxy-D-ribos-5-yl)-L-homocysteine = (S)-4,5-dihydroxypentane-2,3-dione + L-homocysteine. Its function is as follows. Involved in the synthesis of autoinducer 2 (AI-2) which is secreted by bacteria and is used to communicate both the cell density and the metabolic potential of the environment. The regulation of gene expression in response to changes in cell density is called quorum sensing. Catalyzes the transformation of S-ribosylhomocysteine (RHC) to homocysteine (HC) and 4,5-dihydroxy-2,3-pentadione (DPD). The sequence is that of S-ribosylhomocysteine lyase from Lacticaseibacillus paracasei (strain ATCC 334 / BCRC 17002 / CCUG 31169 / CIP 107868 / KCTC 3260 / NRRL B-441) (Lactobacillus paracasei).